A 370-amino-acid chain; its full sequence is Queuine tRNA-ribosyltransferase (370 aa).

Asp-89 acts as the Proton acceptor in catalysis. Substrate-binding positions include Asp-89–Phe-93, Asp-143, and Gly-214. The interval Gly-245–Asp-251 is RNA binding. Asp-264 acts as the Nucleophile in catalysis. The RNA binding; important for wobble base 34 recognition stretch occupies residues Thr-269–Arg-273. Zn(2+) is bound by residues Cys-302, Cys-304, Cys-307, and His-333.

Belongs to the queuine tRNA-ribosyltransferase family. Homodimer. Within each dimer, one monomer is responsible for RNA recognition and catalysis, while the other monomer binds to the replacement base PreQ1. Zn(2+) is required as a cofactor.

The enzyme catalyses 7-aminomethyl-7-carbaguanine + guanosine(34) in tRNA = 7-aminomethyl-7-carbaguanosine(34) in tRNA + guanine. Its pathway is tRNA modification; tRNA-queuosine biosynthesis. Catalyzes the base-exchange of a guanine (G) residue with the queuine precursor 7-aminomethyl-7-deazaguanine (PreQ1) at position 34 (anticodon wobble position) in tRNAs with GU(N) anticodons (tRNA-Asp, -Asn, -His and -Tyr). Catalysis occurs through a double-displacement mechanism. The nucleophile active site attacks the C1' of nucleotide 34 to detach the guanine base from the RNA, forming a covalent enzyme-RNA intermediate. The proton acceptor active site deprotonates the incoming PreQ1, allowing a nucleophilic attack on the C1' of the ribose to form the product. After dissociation, two additional enzymatic reactions on the tRNA convert PreQ1 to queuine (Q), resulting in the hypermodified nucleoside queuosine (7-(((4,5-cis-dihydroxy-2-cyclopenten-1-yl)amino)methyl)-7-deazaguanosine). This Buchnera aphidicola subsp. Acyrthosiphon pisum (strain APS) (Acyrthosiphon pisum symbiotic bacterium) protein is Queuine tRNA-ribosyltransferase.